Reading from the N-terminus, the 94-residue chain is UPF0768 protein YBL029C-A (94 aa).

Belongs to the UPF0768 family.

The protein resides in the cell membrane. This chain is UPF0768 protein YBL029C-A, found in Saccharomyces cerevisiae (strain ATCC 204508 / S288c) (Baker's yeast).